We begin with the raw amino-acid sequence, 226 residues long: 2-C-methyl-D-erythritol 4-phosphate cytidylyltransferase (226 aa).

Belongs to the IspD/TarI cytidylyltransferase family. IspD subfamily.

It carries out the reaction 2-C-methyl-D-erythritol 4-phosphate + CTP + H(+) = 4-CDP-2-C-methyl-D-erythritol + diphosphate. It functions in the pathway isoprenoid biosynthesis; isopentenyl diphosphate biosynthesis via DXP pathway; isopentenyl diphosphate from 1-deoxy-D-xylulose 5-phosphate: step 2/6. Functionally, catalyzes the formation of 4-diphosphocytidyl-2-C-methyl-D-erythritol from CTP and 2-C-methyl-D-erythritol 4-phosphate (MEP). The chain is 2-C-methyl-D-erythritol 4-phosphate cytidylyltransferase from Rhodococcus jostii (strain RHA1).